The chain runs to 298 residues: Probable aspartoacylase (298 aa).

Zn(2+) contacts are provided by H13 and E16. Substrate contacts are provided by residues R54 and 61 to 62 (NR). Residue H103 participates in Zn(2+) binding. Positions 161 and 271 each coordinate substrate.

It belongs to the AspA/AstE family. Aspartoacylase subfamily. It depends on Zn(2+) as a cofactor.

The catalysed reaction is an N-acyl-L-aspartate + H2O = a carboxylate + L-aspartate. The sequence is that of Probable aspartoacylase from Prochlorococcus marinus (strain MIT 9515).